Here is a 177-residue protein sequence, read N- to C-terminus: Alpha-crystallin B chain (177 aa).

An N-acetylmethionine modification is found at M1. Residues 58–166 form the sHSP domain; that stretch reads RMPSWAQTGL…PERSVPISRD (109 aa). Residues H85, H106, E108, H113, and H121 each contribute to the Zn(2+) site. The span at 155-169 shows a compositional bias: basic and acidic residues; sequence DVPERSVPISRDEKP. Residues 155 to 177 form a disordered region; that stretch reads DVPERSVPISRDEKPAVAGPQQK.

Belongs to the small heat shock protein (HSP20) family. Heteromer composed of three CRYAA and one CRYAB subunits. Aggregates with homologous proteins, including the small heat shock protein HSPB1, to form large heteromeric complexes. Inter-subunit bridging via zinc ions enhances stability, which is crucial as there is no protein turn over in the lens. Interacts with HSPBAP1 and TTN/titin.

In terms of biological role, may contribute to the transparency and refractive index of the lens. The chain is Alpha-crystallin B chain (CRYAB) from Squalus acanthias (Spiny dogfish).